We begin with the raw amino-acid sequence, 120 residues long: Large ribosomal subunit protein bL12 (120 aa).

Positions 95–112 (KEGVSKEEAEEVQGKLEE) are enriched in basic and acidic residues. The disordered stretch occupies residues 95-120 (KEGVSKEEAEEVQGKLEEAGASVEVK).

It belongs to the bacterial ribosomal protein bL12 family. As to quaternary structure, homodimer. Part of the ribosomal stalk of the 50S ribosomal subunit. Forms a multimeric L10(L12)X complex, where L10 forms an elongated spine to which 2 to 4 L12 dimers bind in a sequential fashion. Binds GTP-bound translation factors.

Functionally, forms part of the ribosomal stalk which helps the ribosome interact with GTP-bound translation factors. Is thus essential for accurate translation. This is Large ribosomal subunit protein bL12 from Oceanobacillus iheyensis (strain DSM 14371 / CIP 107618 / JCM 11309 / KCTC 3954 / HTE831).